A 375-amino-acid chain; its full sequence is Secondary metabolism regulator laeA (375 aa).

Polar residues predominate over residues 15–26 (ASPNRNNYSYQG). Disordered regions lie at residues 15 to 37 (ASPN…RSRQ) and 50 to 75 (QEPP…TSHY).

The protein belongs to the methyltransferase superfamily. LaeA methyltransferase family. As to quaternary structure, component of the heterotrimeric velvet complex composed of laeA, veA and velB; VeA acting as a bridging protein between laeA and velB.

The protein localises to the nucleus. It carries out the reaction L-methionyl-[protein] + S-adenosyl-L-methionine = S-methyl-L-methionyl-[protein] + S-adenosyl-L-homocysteine. Its function is as follows. Methyltransferase that performs automethylation. No other methyl-accepting substrate has been identified yet. Component of the velvet transcription factor complex that acts as a global regulator for secondary metabolite gene expression. Controls the expression of the citric acid, demethylkotanin, orlandin, asperrubrol, tensidol B, atromentin and JBIR8 gene clusters. Also represses the expression of genes related to the production of BMS-192548 and aspernigrin A. The protein is Secondary metabolism regulator laeA of Aspergillus niger (strain ATCC 1015 / CBS 113.46 / FGSC A1144 / LSHB Ac4 / NCTC 3858a / NRRL 328 / USDA 3528.7).